We begin with the raw amino-acid sequence, 287 residues long: SPX domain-containing protein 2 (287 aa).

One can recognise an SPX domain in the interval 1–162 (MKFGKSLSNQ…GALIRLPFIQ (162 aa)). The span at 36-50 (EPRSVENRPNKRSRS) shows a compositional bias: basic and acidic residues. 2 disordered regions span residues 36–61 (EPRS…DPTV) and 194–213 (KSRN…VKTG).

The protein resides in the nucleus. Functionally, may inhibit PHR1 DNA-binding activity in a Pi-dependent manner. In Arabidopsis thaliana (Mouse-ear cress), this protein is SPX domain-containing protein 2.